Consider the following 322-residue polypeptide: NADH-cytochrome b5 reductase 2 (322 aa).

The helical transmembrane segment at 30-46 (LAPVYVAVGLAGLGVGL) threads the bilayer. Residues 71–176 (QGWVNLKLSD…KGPLPKYPWE (106 aa)) form the FAD-binding FR-type domain. 179–214 (KHKHICLVAGGTGITPMYQLAREIFKNPEDKTKVTL) serves as a coordination point for FAD.

Belongs to the flavoprotein pyridine nucleotide cytochrome reductase family. It depends on FAD as a cofactor.

The protein resides in the mitochondrion outer membrane. It carries out the reaction 2 Fe(III)-[cytochrome b5] + NADH = 2 Fe(II)-[cytochrome b5] + NAD(+) + H(+). Its function is as follows. May mediate the reduction of outer membrane cytochrome b5. The protein is NADH-cytochrome b5 reductase 2 (mcr1) of Emericella nidulans (strain FGSC A4 / ATCC 38163 / CBS 112.46 / NRRL 194 / M139) (Aspergillus nidulans).